A 67-amino-acid chain; its full sequence is Protein DsrB (67 aa).

It belongs to the DsrB family.

In Pectobacterium carotovorum subsp. carotovorum (strain PC1), this protein is Protein DsrB.